The primary structure comprises 101 residues: Toxin Tpa8 (101 aa).

Residues 1 to 20 (MVKSEMKLVIFSLFLLLIGV) form the signal peptide. The LCN-type CS-alpha/beta domain maps to 24 to 98 (KNGYPVIEGG…VMDRTKEYCE (75 aa)). 4 disulfide bridges follow: C44–C70, C56–C75, C60–C77, and C71–C97.

The protein belongs to the long (4 C-C) scorpion toxin superfamily. Sodium channel inhibitor family. Beta subfamily. Expressed by the venom gland.

Its subcellular location is the secreted. Excitatory insect beta-toxins induce a spastic paralysis. They bind voltage-independently at site-4 of sodium channels (Nav) and shift the voltage of activation toward more negative potentials thereby affecting sodium channel activation and promoting spontaneous and repetitive firing. In Tityus pachyurus (Colombian scorpion), this protein is Toxin Tpa8.